The primary structure comprises 293 residues: Probable chromosome 2-partitioning protein ParB (293 aa).

This sequence belongs to the ParB family.

Its function is as follows. Involved in chromosome partition. Localize to both poles of the predivisional cell following completion of DNA replication. Binds to the DNA origin of replication. This is Probable chromosome 2-partitioning protein ParB (parB2) from Deinococcus radiodurans (strain ATCC 13939 / DSM 20539 / JCM 16871 / CCUG 27074 / LMG 4051 / NBRC 15346 / NCIMB 9279 / VKM B-1422 / R1).